We begin with the raw amino-acid sequence, 265 residues long: Esterase claE (265 aa).

Active-site charge relay system residues include Ser121, Asp211, and His239.

This sequence belongs to the LovG family.

It functions in the pathway secondary metabolite biosynthesis. Esterase; part of the cla gene cluster that produces clavatol and ortho-quinone methide. The clavatol biosynthesis cluster cla and the terrestric acid cluster tra are both involved in the production of peniphenones and penilactones. The non-reducing PKS claF is responsible for the formation of clavatol from successive condensations of 3 malonyl-CoA units, presumably with a simple acetyl-CoA starter unit, and 2 methylation steps. The esterase claE probably collaborates with claF by catalyzing the hydrolysis of ACP-bound acyl intermediates to free the ACP from stalled intermediates. The clavatol oxidase claD then converts clavatol to hydroxyclavatol. Spontaneous dehydration of hydroxyclavatol leads to the accumulation of the highly active ortho-quinone methide. On the other hand, the PKS-NRPS hybrid traA is involved in the formation of crustosic acid, with the help of traB and traD. The polyketide synthase module (PKS) of traA is responsible for the synthesis of the polyketide backbone via the condensation of an acetyl-CoA starter unit with 3 malonyl-CoA units. The downstream nonribosomal peptide synthetase (NRPS) module then amidates the carboxyl end of the polyketide with L-malic acid. Because traA lacks a designated enoylreductase (ER) domain, the required activity is provided the enoyl reductase traG. Crustosic acid undergoes decarboxylation and isomerization to the terrestric acid, catalyzed by the 2-oxoglutarate-dependent dioxygenase traH. Both acids are further converted to the 2 gamma-butyrolactones (R)-5-methyltetronic acid and (S)-5-carboxylmethyltetronic acid, with involvement of the cytochrome P450 monooxygenase claJ. Spontaneous addition of the methide to these gamma-butyrolactones leads to peniphenone D and penilactone D, which undergo again stereospecific attacking by methide to give penilactones A and B. The polypeptide is Esterase claE (Penicillium crustosum (Blue mold fungus)).